A 481-amino-acid chain; its full sequence is Protein nucleotidyltransferase YdiU (481 aa).

The ATP site is built by glycine 85, glycine 87, arginine 88, lysine 108, aspartate 120, glycine 121, arginine 172, and arginine 179. Aspartate 248 serves as the catalytic Proton acceptor. 2 residues coordinate Mg(2+): asparagine 249 and aspartate 258. Aspartate 258 is a binding site for ATP.

It belongs to the SELO family. It depends on Mg(2+) as a cofactor. Mn(2+) serves as cofactor.

It catalyses the reaction L-seryl-[protein] + ATP = 3-O-(5'-adenylyl)-L-seryl-[protein] + diphosphate. The enzyme catalyses L-threonyl-[protein] + ATP = 3-O-(5'-adenylyl)-L-threonyl-[protein] + diphosphate. It carries out the reaction L-tyrosyl-[protein] + ATP = O-(5'-adenylyl)-L-tyrosyl-[protein] + diphosphate. The catalysed reaction is L-histidyl-[protein] + UTP = N(tele)-(5'-uridylyl)-L-histidyl-[protein] + diphosphate. It catalyses the reaction L-seryl-[protein] + UTP = O-(5'-uridylyl)-L-seryl-[protein] + diphosphate. The enzyme catalyses L-tyrosyl-[protein] + UTP = O-(5'-uridylyl)-L-tyrosyl-[protein] + diphosphate. Functionally, nucleotidyltransferase involved in the post-translational modification of proteins. It can catalyze the addition of adenosine monophosphate (AMP) or uridine monophosphate (UMP) to a protein, resulting in modifications known as AMPylation and UMPylation. The sequence is that of Protein nucleotidyltransferase YdiU from Cereibacter sphaeroides (strain ATCC 17025 / ATH 2.4.3) (Rhodobacter sphaeroides).